We begin with the raw amino-acid sequence, 187 residues long: Adenylate kinase (187 aa).

ATP is bound at residue Gly-10–Thr-15. Positions Ser-30–Val-59 are NMP. AMP is bound by residues Thr-31, Arg-36, Asp-57 to Val-59, Gly-85 to Arg-88, and Gln-92. The LID stretch occupies residues Gly-126–Asp-136. Arg-127 lines the ATP pocket. Positions 133 and 144 each coordinate AMP. Gly-172 provides a ligand contact to ATP.

This sequence belongs to the adenylate kinase family. In terms of assembly, monomer.

It localises to the cytoplasm. It carries out the reaction AMP + ATP = 2 ADP. It functions in the pathway purine metabolism; AMP biosynthesis via salvage pathway; AMP from ADP: step 1/1. Catalyzes the reversible transfer of the terminal phosphate group between ATP and AMP. Plays an important role in cellular energy homeostasis and in adenine nucleotide metabolism. This Xanthomonas campestris pv. campestris (strain 8004) protein is Adenylate kinase.